A 217-amino-acid chain; its full sequence is Protein GrpE (217 aa).

The protein belongs to the GrpE family. As to quaternary structure, homodimer.

It is found in the cytoplasm. Functionally, participates actively in the response to hyperosmotic and heat shock by preventing the aggregation of stress-denatured proteins, in association with DnaK and GrpE. It is the nucleotide exchange factor for DnaK and may function as a thermosensor. Unfolded proteins bind initially to DnaJ; upon interaction with the DnaJ-bound protein, DnaK hydrolyzes its bound ATP, resulting in the formation of a stable complex. GrpE releases ADP from DnaK; ATP binding to DnaK triggers the release of the substrate protein, thus completing the reaction cycle. Several rounds of ATP-dependent interactions between DnaJ, DnaK and GrpE are required for fully efficient folding. In Mycoplasma pneumoniae (strain ATCC 29342 / M129 / Subtype 1) (Mycoplasmoides pneumoniae), this protein is Protein GrpE.